The primary structure comprises 175 residues: Electron transport protein HydN (175 aa).

4 consecutive 4Fe-4S ferredoxin-type domains span residues 2–32, 48–79, 80–109, and 124–157; these read NRFI…NQDC, KGVN…SRDK, GFVH…VVVR, and DKAE…CVDR. [4Fe-4S] cluster is bound by residues Cys12, Cys15, Cys18, Cys22, Cys58, Cys61, Cys66, Cys70, Cys89, Cys92, Cys95, Cys99, Cys131, Cys134, Cys143, and Cys147.

[4Fe-4S] cluster is required as a cofactor.

In terms of biological role, electron transport from formate to hydrogen. The chain is Electron transport protein HydN (hydN) from Escherichia coli O157:H7.